Consider the following 502-residue polypeptide: Putative ZDHHC-type palmitoyltransferase 3 (502 aa).

The segment at 1-80 (MVNNNNKNNK…ESTNENNKKL (80 aa)) is disordered. Positions 10–30 (KINDRENEENEKNKKKDKIYE) are enriched in basic and acidic residues. Low complexity predominate over residues 31-52 (NKIGINENNNENNNYQNENFIY). A glycan (N-linked (GlcNAc...) asparagine) is linked at N58. Acidic residues predominate over residues 59–73 (DTQEGDISEIQEEST). 2 helical membrane-spanning segments follow: residues 104 to 124 (FFIVTQIFILVPSLFFEIKLV) and 134 to 154 (LEISNYIITLTLLVFIFYNLY). The interval 200-281 (IANDDPISSS…NNNNNNNKNQ (82 aa)) is disordered. Positions 203-212 (DDPISSSSDF) are enriched in low complexity. A compositionally biased stretch (acidic residues) spans 213-222 (SDSDDDDQDE). Low complexity predominate over residues 248–280 (NSNNNNSNNNNNNNKNRNRNNNNNNNNNNNNKN). Residues N252 and N280 are each glycosylated (N-linked (GlcNAc...) asparagine). The 51-residue stretch at 299-349 (KFCITCGLYREPRSFHCSTCNNCVENFDHHCVWIGNCIGRRNYREFFYFIT) folds into the DHHC domain. C329 acts as the S-palmitoyl cysteine intermediate in catalysis. The chain crosses the membrane as a helical span at residues 344-364 (FFYFITTTLIYALYLLSMSIV). N-linked (GlcNAc...) asparagine glycosylation is found at N371, N388, and N393. The chain crosses the membrane as a helical span at residues 419 to 439 (GLCIFIIIFGFIMSLLLGFLV). N449, N483, and N494 each carry an N-linked (GlcNAc...) asparagine glycan.

The protein belongs to the DHHC palmitoyltransferase family.

The protein resides in the membrane. It carries out the reaction L-cysteinyl-[protein] + hexadecanoyl-CoA = S-hexadecanoyl-L-cysteinyl-[protein] + CoA. This Dictyostelium discoideum (Social amoeba) protein is Putative ZDHHC-type palmitoyltransferase 3.